Consider the following 704-residue polypeptide: MALEALTDLKKVRNIGIMAHIDAGKTTTTERILFYTGINRKVGETHDGASTMDWMEQEKERGITITSAATTCFWKDNQINIIDTPGHVDFTIEVERSLRVLDGAVAVFDAKEGVEPQSEQVWRQATKYDVPRICFVNKMDKLGADFYYTVQTIVDRLGAKPLVMALPIGAEDDFDGIVDLLNMRAVTWRGKVEIGAEATYEEIPEDLKDKAEEYREKLVETVAESDEELMERYFAGEEITVDELKAQIRKLTISSEVYPVYCGSAYKNKGIQPMLDAVIDFLPNPMDVGSIKGHDAKDPEVEVLRKPSKDEPFSALAFKVAVHPFFGKLTYVRVYSGSVETGGQVMNSTKEKKERIGKLFQMHSNKEQPVDRASAGHIYAFIGLKDTTTGDTLCDAQDPVILESMDFPDPVIEVAIEPKTKSDQEKLGTAIQKLAEEDPTFTVKLDEETGQTVLGGMGELHLDVMVDRMKREFKVEANIGNPQVAYRETIRKPVEKLEYTHKKQTGGSGQFARVIIALEPYEPEEGSDQTYEFVNEVTGGRVPKEYIPSVDAGIQDAMQYGYLAGFPLVNIKATLLDGAYHEVDSSEMAFKLAGSQALKEAVAKAKPVLLEPLMAVEVITPEEYMGDVIGDINSRRGQVSSMDDRAGAKVVKAKVPLSEMFGYIGDLRSRTAGRANFSMIFDSYGEVPTNVASDIIAERTGGNA.

The tr-type G domain occupies K10 to M286. GTP is bound by residues A19–T26, D83–H87, and N137–D140.

This sequence belongs to the TRAFAC class translation factor GTPase superfamily. Classic translation factor GTPase family. EF-G/EF-2 subfamily.

It localises to the cytoplasm. Its function is as follows. Catalyzes the GTP-dependent ribosomal translocation step during translation elongation. During this step, the ribosome changes from the pre-translocational (PRE) to the post-translocational (POST) state as the newly formed A-site-bound peptidyl-tRNA and P-site-bound deacylated tRNA move to the P and E sites, respectively. Catalyzes the coordinated movement of the two tRNA molecules, the mRNA and conformational changes in the ribosome. In Corynebacterium jeikeium (strain K411), this protein is Elongation factor G.